Consider the following 308-residue polypeptide: Carbonic anhydrase 6 (308 aa).

The first 17 residues, 1 to 17 (MRALVLLLSLFLLGGQA), serve as a signal peptide directing secretion. One can recognise an Alpha-carbonic anhydrase domain in the interval 21 to 278 (SDWTYSEGAL…LNHRVVESNF (258 aa)). The cysteines at positions 42 and 224 are disulfide-linked. Asparagine 67 carries N-linked (GlcNAc...) asparagine glycosylation. Catalysis depends on histidine 85, which acts as the Proton donor/acceptor. Zn(2+) contacts are provided by histidine 111, histidine 113, and histidine 138. 220-221 (TT) contacts substrate. N-linked (GlcNAc...) asparagine glycosylation occurs at asparagine 256.

It belongs to the alpha-carbonic anhydrase family. Requires Zn(2+) as cofactor. As to expression, major constituent of saliva.

The protein resides in the secreted. The catalysed reaction is hydrogencarbonate + H(+) = CO2 + H2O. Its activity is regulated as follows. Inhibited by coumarins, sulfonamide derivatives such as acetazolamide (AZA), saccharin and Foscarnet (phosphonoformate trisodium salt). In terms of biological role, reversible hydration of carbon dioxide. Its role in saliva is unknown. This chain is Carbonic anhydrase 6 (CA6), found in Homo sapiens (Human).